A 145-amino-acid polypeptide reads, in one-letter code: Arginine repressor (145 aa).

Belongs to the ArgR family.

It localises to the cytoplasm. It participates in amino-acid biosynthesis; L-arginine biosynthesis [regulation]. Regulates arginine biosynthesis genes. This Streptococcus mutans serotype c (strain ATCC 700610 / UA159) protein is Arginine repressor.